Here is a 364-residue protein sequence, read N- to C-terminus: 4-hydroxythreonine-4-phosphate dehydrogenase (364 aa).

2 residues coordinate substrate: His148 and Thr149. His177, His216, and His301 together coordinate a divalent metal cation. Substrate is bound by residues Lys309, Asn318, and Arg327.

It belongs to the PdxA family. In terms of assembly, homodimer. Requires Zn(2+) as cofactor. Mg(2+) is required as a cofactor. Co(2+) serves as cofactor.

It localises to the cytoplasm. It carries out the reaction 4-(phosphooxy)-L-threonine + NAD(+) = 3-amino-2-oxopropyl phosphate + CO2 + NADH. It functions in the pathway cofactor biosynthesis; pyridoxine 5'-phosphate biosynthesis; pyridoxine 5'-phosphate from D-erythrose 4-phosphate: step 4/5. Functionally, catalyzes the NAD(P)-dependent oxidation of 4-(phosphooxy)-L-threonine (HTP) into 2-amino-3-oxo-4-(phosphooxy)butyric acid which spontaneously decarboxylates to form 3-amino-2-oxopropyl phosphate (AHAP). In Campylobacter jejuni subsp. jejuni serotype O:23/36 (strain 81-176), this protein is 4-hydroxythreonine-4-phosphate dehydrogenase.